Here is a 125-residue protein sequence, read N- to C-terminus: Salivary protein 15 Ipac-1 (125 aa).

The N-terminal stretch at 1–15 (MKVVCIILLFGIAAA) is a signal peptide. Asparagine 82 and asparagine 94 each carry an N-linked (GlcNAc...) asparagine glycan. Residues 106 to 125 (GPSGQTCADKSKCVGHIPGC) form a CD4-binding region.

This sequence belongs to the salp15 family. In terms of assembly, interacts with host CD4. Interacts with host DC-SIGN (CD209). Interacts with Borrelia outer surface protein C (OspC). As to expression, expressed in salivary glands.

It localises to the secreted. Functionally, salivary tick protein that downregulates host immune system by binding to both dendritic cells, and CD4(+) T cells. Specifically binds to the CD4 coreceptor on T cells. This interaction prevents the activation of the Src kinase, Lck, and its downstream substrate Zap-70, and results in deficient activation of PLCgamma1, the repression of calcium fluxes triggered by T-cell antigen receptor (TCR) ligation, and a subsequent reduction in interleukin-2 production. This salivary protein also binds to DC-SIGN (CD209) on dendritic cells (DC) and activates the Raf-1 kinase/MEK signaling pathway that results in down-regulating expression of pro-inflammatory cytokines. Furthermore, it inhibits T cell proliferation induced by DCs. It also inhibits in vitro keratinocyte inflammation induced by Borrelia burgdorferi or by the major outer surface protein (OspC) of Borrelia. In addition, it downregulates chemokines and monocyte chemoattractant protein 1, as well as several antimicrobial peptides such as defensins, cathelicidin, psoriasin, and RNase 7. Apart from its immunomodulatory activities, it is also associated with protection of Borrelia spirochetes from antibody-mediated killing through its binding to OspC. In vivo, tests on different immune disease animal models show promising therapeutic results, e.g., in inhibiting HIV infection, experimental autoimmune encephalomyelitis, transplantation rejection, and asthma. The chain is Salivary protein 15 Ipac-1 from Ixodes pacificus (Western black-legged tick).